The following is a 289-amino-acid chain: 4-hydroxybenzoate octaprenyltransferase (289 aa).

Transmembrane regions (helical) follow at residues 23 to 43 (IGALLLLWPTLWALWVATPGV), 46 to 66 (LWILAVFVAGVWLMRAAGCVV), 99 to 119 (LFVVLVALSFLLVLTLNTMTI), 141 to 161 (LPQVVLGAAFGWSIPMAFAAV), 163 to 183 (ESVPLSCWLMFLANILWAVAY), 213 to 233 (LIIGILQIAVLALMALIGWLN), 234 to 254 (GLGWGYYWSVLVAGALFVYQQ), and 268 to 288 (AFMNNNYVGLVLFLGLAMSYV).

Belongs to the UbiA prenyltransferase family. Requires Mg(2+) as cofactor.

It is found in the cell inner membrane. The enzyme catalyses all-trans-octaprenyl diphosphate + 4-hydroxybenzoate = 4-hydroxy-3-(all-trans-octaprenyl)benzoate + diphosphate. It functions in the pathway cofactor biosynthesis; ubiquinone biosynthesis. In terms of biological role, catalyzes the prenylation of para-hydroxybenzoate (PHB) with an all-trans polyprenyl group. Mediates the second step in the final reaction sequence of ubiquinone-8 (UQ-8) biosynthesis, which is the condensation of the polyisoprenoid side chain with PHB, generating the first membrane-bound Q intermediate 3-octaprenyl-4-hydroxybenzoate. The polypeptide is 4-hydroxybenzoate octaprenyltransferase (Citrobacter koseri (strain ATCC BAA-895 / CDC 4225-83 / SGSC4696)).